Here is a 124-residue protein sequence, read N- to C-terminus: Small ribosomal subunit protein uS12 (124 aa).

Residues 1–24 (MTTINQLVRKPRQATTYKSASPAL) form a disordered region. 3-methylthioaspartic acid is present on Asp-89.

The protein belongs to the universal ribosomal protein uS12 family. In terms of assembly, part of the 30S ribosomal subunit. Contacts proteins S8 and S17. May interact with IF1 in the 30S initiation complex.

Functionally, with S4 and S5 plays an important role in translational accuracy. Its function is as follows. Interacts with and stabilizes bases of the 16S rRNA that are involved in tRNA selection in the A site and with the mRNA backbone. Located at the interface of the 30S and 50S subunits, it traverses the body of the 30S subunit contacting proteins on the other side and probably holding the rRNA structure together. The combined cluster of proteins S8, S12 and S17 appears to hold together the shoulder and platform of the 30S subunit. This chain is Small ribosomal subunit protein uS12, found in Xanthomonas axonopodis pv. citri (strain 306).